A 346-amino-acid polypeptide reads, in one-letter code: 4-hydroxy-3-methylbut-2-enyl diphosphate reductase (346 aa).

Cys-19 lines the [4Fe-4S] cluster pocket. 2 residues coordinate (2E)-4-hydroxy-3-methylbut-2-enyl diphosphate: His-48 and His-84. His-48 and His-84 together coordinate dimethylallyl diphosphate. The isopentenyl diphosphate site is built by His-48 and His-84. Cys-106 is a binding site for [4Fe-4S] cluster. (2E)-4-hydroxy-3-methylbut-2-enyl diphosphate is bound at residue His-134. His-134 is a dimethylallyl diphosphate binding site. His-134 provides a ligand contact to isopentenyl diphosphate. Catalysis depends on Glu-136, which acts as the Proton donor. Residue Thr-175 coordinates (2E)-4-hydroxy-3-methylbut-2-enyl diphosphate. Cys-205 contacts [4Fe-4S] cluster. Positions 233, 234, 235, and 278 each coordinate (2E)-4-hydroxy-3-methylbut-2-enyl diphosphate. Dimethylallyl diphosphate-binding residues include Ser-233, Ser-234, Asn-235, and Ser-278. Residues Ser-233, Ser-234, Asn-235, and Ser-278 each coordinate isopentenyl diphosphate.

The protein belongs to the IspH family. The cofactor is [4Fe-4S] cluster.

The catalysed reaction is isopentenyl diphosphate + 2 oxidized [2Fe-2S]-[ferredoxin] + H2O = (2E)-4-hydroxy-3-methylbut-2-enyl diphosphate + 2 reduced [2Fe-2S]-[ferredoxin] + 2 H(+). The enzyme catalyses dimethylallyl diphosphate + 2 oxidized [2Fe-2S]-[ferredoxin] + H2O = (2E)-4-hydroxy-3-methylbut-2-enyl diphosphate + 2 reduced [2Fe-2S]-[ferredoxin] + 2 H(+). Its pathway is isoprenoid biosynthesis; dimethylallyl diphosphate biosynthesis; dimethylallyl diphosphate from (2E)-4-hydroxy-3-methylbutenyl diphosphate: step 1/1. The protein operates within isoprenoid biosynthesis; isopentenyl diphosphate biosynthesis via DXP pathway; isopentenyl diphosphate from 1-deoxy-D-xylulose 5-phosphate: step 6/6. Functionally, catalyzes the conversion of 1-hydroxy-2-methyl-2-(E)-butenyl 4-diphosphate (HMBPP) into a mixture of isopentenyl diphosphate (IPP) and dimethylallyl diphosphate (DMAPP). Acts in the terminal step of the DOXP/MEP pathway for isoprenoid precursor biosynthesis. This Brucella suis biovar 1 (strain 1330) protein is 4-hydroxy-3-methylbut-2-enyl diphosphate reductase.